Reading from the N-terminus, the 154-residue chain is Transcriptional repressor NrdR (154 aa).

A zinc finger spans residues 3 to 34 (CPFCSHNDSKVIDSRPTDEGQAIRRRRECISC). Residues 49–139 (LIVVKKNGNR…VYREFKDINT (91 aa)) enclose the ATP-cone domain.

Belongs to the NrdR family. Zn(2+) is required as a cofactor.

Functionally, negatively regulates transcription of bacterial ribonucleotide reductase nrd genes and operons by binding to NrdR-boxes. This Alkaliphilus oremlandii (strain OhILAs) (Clostridium oremlandii (strain OhILAs)) protein is Transcriptional repressor NrdR.